Here is a 551-residue protein sequence, read N- to C-terminus: Hydroxymethylpyrimidine/phosphomethylpyrimidine kinase THI20 (551 aa).

4-amino-5-hydroxymethyl-2-methylpyrimidine is bound at residue glutamine 64. Cysteine 468 functions as the Nucleophile in the catalytic mechanism. The Proton donor role is filled by glutamate 540.

In the N-terminal section; belongs to the ThiD family. The protein in the C-terminal section; belongs to the thiaminase-2 family.

It catalyses the reaction 4-amino-5-hydroxymethyl-2-methylpyrimidine + ATP = 4-amino-2-methyl-5-(phosphooxymethyl)pyrimidine + ADP + H(+). The enzyme catalyses 4-amino-2-methyl-5-(phosphooxymethyl)pyrimidine + ATP = 4-amino-2-methyl-5-(diphosphooxymethyl)pyrimidine + ADP. It carries out the reaction thiamine + H2O = 5-(2-hydroxyethyl)-4-methylthiazole + 4-amino-5-hydroxymethyl-2-methylpyrimidine + H(+). It functions in the pathway cofactor biosynthesis; thiamine diphosphate biosynthesis; 4-amino-2-methyl-5-diphosphomethylpyrimidine from 5-amino-1-(5-phospho-D-ribosyl)imidazole: step 2/3. Its pathway is cofactor biosynthesis; thiamine diphosphate biosynthesis; 4-amino-2-methyl-5-diphosphomethylpyrimidine from 5-amino-1-(5-phospho-D-ribosyl)imidazole: step 3/3. Its function is as follows. Trifunctional protein with both thiamine biosynthetic and degradative activity. Within the thiamine biosynthesis pathway, catalyzes the phosphorylation of hydroxymethylpyrimidine (HMP) to hydroxymethylpyrimidine phosphate (HMP-P), as well as of HMP-P to HMP-PP. Also has thiaminase II activity and degrades thiamine using water as the nucleophile, resulting only in the formation of HMP (4-amino-2-methyl-5-hydroxymethylpyrimidine) and Thz (4-methyl-5-thiazole ethanol). This is Hydroxymethylpyrimidine/phosphomethylpyrimidine kinase THI20 from Saccharomyces cerevisiae (strain ATCC 204508 / S288c) (Baker's yeast).